A 236-amino-acid polypeptide reads, in one-letter code: Mitochondrial inner membrane protease ATP23 (236 aa).

Residue histidine 136 participates in a divalent metal cation binding. The active site involves glutamate 137. Histidine 140 provides a ligand contact to a divalent metal cation.

It belongs to the peptidase M76 family.

It localises to the mitochondrion inner membrane. Functionally, has a dual role in the assembly of mitochondrial ATPase. Acts as a protease that removes N-terminal residues of mitochondrial ATPase CF(0) subunit 6 at the intermembrane space side. Also involved in the correct assembly of the membrane-embedded ATPase CF(0) particle, probably mediating association of subunit 6 with the subunit 9 ring. This is Mitochondrial inner membrane protease ATP23 (ATP23) from Debaryomyces hansenii (strain ATCC 36239 / CBS 767 / BCRC 21394 / JCM 1990 / NBRC 0083 / IGC 2968) (Yeast).